Here is a 64-residue protein sequence, read N- to C-terminus: Large ribosomal subunit protein bL35 (64 aa).

This sequence belongs to the bacterial ribosomal protein bL35 family.

The sequence is that of Large ribosomal subunit protein bL35 from Lactiplantibacillus plantarum (strain ATCC BAA-793 / NCIMB 8826 / WCFS1) (Lactobacillus plantarum).